The chain runs to 321 residues: Translation initiation factor eIF2B subunit alpha (321 aa).

The protein belongs to the eIF-2B alpha/beta/delta subunits family. As to quaternary structure, component of the translation initiation factor 2B (eIF2B) complex which is a heterodecamer of two sets of five different subunits: alpha, beta, gamma, delta and epsilon. Subunits alpha, beta and delta comprise a regulatory subcomplex and subunits epsilon and gamma comprise a catalytic subcomplex. Within the complex, the hexameric regulatory complex resides at the center, with the two heterodimeric catalytic subcomplexes bound on opposite sides.

It localises to the cytoplasm. The protein resides in the cytosol. Functionally, acts as a component of the translation initiation factor 2B (eIF2B) complex, which catalyzes the exchange of GDP for GTP on eukaryotic initiation factor 2 (eIF2) gamma subunit. Its guanine nucleotide exchange factor activity is repressed when bound to eIF2 complex phosphorylated on the alpha subunit, thereby limiting the amount of methionyl-initiator methionine tRNA available to the ribosome and consequently global translation is repressed. The sequence is that of Translation initiation factor eIF2B subunit alpha (eif2b1) from Dictyostelium discoideum (Social amoeba).